A 274-amino-acid polypeptide reads, in one-letter code: Thiamine kinase (274 aa).

The protein belongs to the thiamine kinase family.

It catalyses the reaction thiamine + ATP = thiamine phosphate + ADP + H(+). The protein operates within cofactor biosynthesis; thiamine diphosphate biosynthesis; thiamine phosphate from thiamine: step 1/1. Catalyzes the ATP-dependent phosphorylation of thiamine to thiamine phosphate. Is involved in thiamine salvage. This chain is Thiamine kinase, found in Escherichia coli O157:H7 (strain EC4115 / EHEC).